Reading from the N-terminus, the 204-residue chain is MGAYKYLEELQRKKQSDVLRFLQRVRVWEYRQKNVIHRAARPTRPDKARRLGYKAKQGFVIYRVRVRRGNRKRPVPKGATYGKPTNQGVNELKYQRSLRATAEERVGRRAANLRVLNSYWVNQDSTYKYFEVILVDPQHKAIRRDARYNWICDPVHKHREARGLTATGKKSRGINKGHKFNNTKAGRRKTWKRQNTLSLWRYRK.

A disordered region spans residues 164-185 (LTATGKKSRGINKGHKFNNTKA). The span at 169–185 (KKSRGINKGHKFNNTKA) shows a compositional bias: basic residues.

The protein belongs to the eukaryotic ribosomal protein eL15 family. Component of the large ribosomal subunit (LSU). Mature yeast ribosomes consist of a small (40S) and a large (60S) subunit. The 40S small subunit contains 1 molecule of ribosomal RNA (18S rRNA) and 33 different proteins (encoded by 57 genes). The large 60S subunit contains 3 rRNA molecules (25S, 5.8S and 5S rRNA) and 46 different proteins (encoded by 81 genes).

Its subcellular location is the cytoplasm. Component of the ribosome, a large ribonucleoprotein complex responsible for the synthesis of proteins in the cell. The small ribosomal subunit (SSU) binds messenger RNAs (mRNAs) and translates the encoded message by selecting cognate aminoacyl-transfer RNA (tRNA) molecules. The large subunit (LSU) contains the ribosomal catalytic site termed the peptidyl transferase center (PTC), which catalyzes the formation of peptide bonds, thereby polymerizing the amino acids delivered by tRNAs into a polypeptide chain. The nascent polypeptides leave the ribosome through a tunnel in the LSU and interact with protein factors that function in enzymatic processing, targeting, and the membrane insertion of nascent chains at the exit of the ribosomal tunnel. This Saccharomyces cerevisiae (strain ATCC 204508 / S288c) (Baker's yeast) protein is Large ribosomal subunit protein eL15A.